The chain runs to 181 residues: CDP-diacylglycerol--glycerol-3-phosphate 3-phosphatidyltransferase (181 aa).

The next 4 membrane-spanning stretches (helical) occupy residues 8–28 (PNYLTIARIMVIPVIILAFYI), 35–55 (KLGALLFVLASITDFFDGYIA), 64–84 (FGKMFDPIADKLLIGCVIIML), and 148–168 (IIYLDIVGEIILWIAAFLTII).

It belongs to the CDP-alcohol phosphatidyltransferase class-I family.

It localises to the cell membrane. The enzyme catalyses a CDP-1,2-diacyl-sn-glycerol + sn-glycerol 3-phosphate = a 1,2-diacyl-sn-glycero-3-phospho-(1'-sn-glycero-3'-phosphate) + CMP + H(+). It participates in phospholipid metabolism; phosphatidylglycerol biosynthesis; phosphatidylglycerol from CDP-diacylglycerol: step 1/2. This protein catalyzes the committed step to the synthesis of the acidic phospholipids. The polypeptide is CDP-diacylglycerol--glycerol-3-phosphate 3-phosphatidyltransferase (pgsA) (Rickettsia felis (strain ATCC VR-1525 / URRWXCal2) (Rickettsia azadi)).